A 940-amino-acid polypeptide reads, in one-letter code: Isoleucine--tRNA ligase (940 aa).

The 'HIGH' region motif lies at P58–H68. L-isoleucyl-5'-AMP is bound at residue E564. The 'KMSKS' region signature appears at K605–S609. K608 is an ATP binding site. Zn(2+) contacts are provided by C903, C906, C923, and C926.

Belongs to the class-I aminoacyl-tRNA synthetase family. IleS type 1 subfamily. As to quaternary structure, monomer. The cofactor is Zn(2+).

The protein localises to the cytoplasm. It carries out the reaction tRNA(Ile) + L-isoleucine + ATP = L-isoleucyl-tRNA(Ile) + AMP + diphosphate. Its function is as follows. Catalyzes the attachment of isoleucine to tRNA(Ile). As IleRS can inadvertently accommodate and process structurally similar amino acids such as valine, to avoid such errors it has two additional distinct tRNA(Ile)-dependent editing activities. One activity is designated as 'pretransfer' editing and involves the hydrolysis of activated Val-AMP. The other activity is designated 'posttransfer' editing and involves deacylation of mischarged Val-tRNA(Ile). The sequence is that of Isoleucine--tRNA ligase from Shewanella sp. (strain MR-4).